The following is a 257-amino-acid chain: Cytochrome c oxidase subunit 3 (257 aa).

The next 6 membrane-spanning stretches (helical) occupy residues 13 to 33, 36 to 56, 80 to 100, 154 to 174, 195 to 215, and 237 to 257; these read PWPI…VSYF, LSMY…FQWW, GMIL…WAFF, YISA…FTMF, FFMT…FLLV, and AWYW…MYWW.

This sequence belongs to the cytochrome c oxidase subunit 3 family. In terms of assembly, component of the cytochrome c oxidase (complex IV, CIV), a multisubunit enzyme composed of a catalytic core of 3 subunits and several supernumerary subunits. The complex exists as a monomer or a dimer and forms supercomplexes (SCs) in the inner mitochondrial membrane with ubiquinol-cytochrome c oxidoreductase (cytochrome b-c1 complex, complex III, CIII).

It localises to the mitochondrion inner membrane. The catalysed reaction is 4 Fe(II)-[cytochrome c] + O2 + 8 H(+)(in) = 4 Fe(III)-[cytochrome c] + 2 H2O + 4 H(+)(out). Its function is as follows. Component of the cytochrome c oxidase, the last enzyme in the mitochondrial electron transport chain which drives oxidative phosphorylation. The respiratory chain contains 3 multisubunit complexes succinate dehydrogenase (complex II, CII), ubiquinol-cytochrome c oxidoreductase (cytochrome b-c1 complex, complex III, CIII) and cytochrome c oxidase (complex IV, CIV), that cooperate to transfer electrons derived from NADH and succinate to molecular oxygen, creating an electrochemical gradient over the inner membrane that drives transmembrane transport and the ATP synthase. Cytochrome c oxidase is the component of the respiratory chain that catalyzes the reduction of oxygen to water. Electrons originating from reduced cytochrome c in the intermembrane space (IMS) are transferred via the dinuclear copper A center (CU(A)) of subunit 2 and heme A of subunit 1 to the active site in subunit 1, a binuclear center (BNC) formed by heme A3 and copper B (CU(B)). The BNC reduces molecular oxygen to 2 water molecules using 4 electrons from cytochrome c in the IMS and 4 protons from the mitochondrial matrix. This is Cytochrome c oxidase subunit 3 (COIII) from Rhipicephalus sanguineus (Brown dog tick).